Reading from the N-terminus, the 931-residue chain is Bifunctional uridylyltransferase/uridylyl-removing enzyme (931 aa).

The uridylyltransferase stretch occupies residues Met1 to Pro383. Positions Glu384–Thr739 are uridylyl-removing. Residues Val499 to Leu622 enclose the HD domain. ACT domains follow at residues Glu740 to Arg822 and Val851 to Ala931.

The protein belongs to the GlnD family. Mg(2+) serves as cofactor.

It catalyses the reaction [protein-PII]-L-tyrosine + UTP = [protein-PII]-uridylyl-L-tyrosine + diphosphate. The catalysed reaction is [protein-PII]-uridylyl-L-tyrosine + H2O = [protein-PII]-L-tyrosine + UMP + H(+). With respect to regulation, uridylyltransferase (UTase) activity is inhibited by glutamine, while glutamine activates uridylyl-removing (UR) activity. In terms of biological role, modifies, by uridylylation and deuridylylation, the PII regulatory proteins (GlnB and homologs), in response to the nitrogen status of the cell that GlnD senses through the glutamine level. Under low glutamine levels, catalyzes the conversion of the PII proteins and UTP to PII-UMP and PPi, while under higher glutamine levels, GlnD hydrolyzes PII-UMP to PII and UMP (deuridylylation). Thus, controls uridylylation state and activity of the PII proteins, and plays an important role in the regulation of nitrogen fixation and metabolism. The polypeptide is Bifunctional uridylyltransferase/uridylyl-removing enzyme (Bradyrhizobium sp. (strain ORS 278)).